Consider the following 249-residue polypeptide: Purine nucleoside phosphorylase ML0918 (249 aa).

3 residues coordinate Zn(2+): histidine 72, cysteine 109, and histidine 126.

The protein belongs to the purine nucleoside phosphorylase YfiH/LACC1 family. Homodimer. Cu(2+) is required as a cofactor. Zn(2+) serves as cofactor.

The catalysed reaction is adenosine + phosphate = alpha-D-ribose 1-phosphate + adenine. It carries out the reaction S-methyl-5'-thioadenosine + phosphate = 5-(methylsulfanyl)-alpha-D-ribose 1-phosphate + adenine. It catalyses the reaction inosine + phosphate = alpha-D-ribose 1-phosphate + hypoxanthine. The enzyme catalyses adenosine + H2O + H(+) = inosine + NH4(+). Functionally, purine nucleoside enzyme that catalyzes the phosphorolysis of adenosine and inosine nucleosides, yielding D-ribose 1-phosphate and the respective free bases, adenine and hypoxanthine. Also catalyzes the phosphorolysis of S-methyl-5'-thioadenosine into adenine and S-methyl-5-thio-alpha-D-ribose 1-phosphate. Also has adenosine deaminase activity. The protein is Purine nucleoside phosphorylase ML0918 of Mycobacterium leprae (strain TN).